A 141-amino-acid polypeptide reads, in one-letter code: Large ribosomal subunit protein bL21 (141 aa).

Residues 111-141 (ATAPSRTEAAPESNPEAAPSAAATGIPADEE) are disordered. Low complexity predominate over residues 118–133 (EAAPESNPEAAPSAAA).

The protein belongs to the bacterial ribosomal protein bL21 family. As to quaternary structure, part of the 50S ribosomal subunit. Contacts protein L20.

This protein binds to 23S rRNA in the presence of protein L20. This chain is Large ribosomal subunit protein bL21, found in Synechococcus sp. (strain JA-2-3B'a(2-13)) (Cyanobacteria bacterium Yellowstone B-Prime).